The following is a 349-amino-acid chain: Probable tRNA pseudouridine synthase B (349 aa).

Residue Asp41 is the Nucleophile of the active site. The PUA domain maps to 207-279 (YPKVIVKETA…KVIDIDNVLI (73 aa)). The segment covering 300 to 309 (IPVQKPERKL) has biased composition (basic and acidic residues). Residues 300-349 (IPVQKPERKLHGNLQGSQEWKDTGNRGNPKRGGTGSKGFSSGFRKRKAKR) are disordered.

It belongs to the pseudouridine synthase TruB family. Type 2 subfamily.

It catalyses the reaction uridine(55) in tRNA = pseudouridine(55) in tRNA. Could be responsible for synthesis of pseudouridine from uracil-55 in the psi GC loop of transfer RNAs. The sequence is that of Probable tRNA pseudouridine synthase B from Picrophilus torridus (strain ATCC 700027 / DSM 9790 / JCM 10055 / NBRC 100828 / KAW 2/3).